Here is an 830-residue protein sequence, read N- to C-terminus: Probable glucan 1,3-beta-glucosidase D (830 aa).

Basic and acidic residues-rich tracts occupy residues 1–11 and 74–84; these read MPGHSRSRDRL and VHEHDHDHEYD. Disordered regions lie at residues 1 to 91, 127 to 163, and 260 to 297; these read MPGH…EEPW, MSGALGDDGPPPLPSDALGRGKGKKRLDRETRRQRRK, and GGPGMEMRHRGGGGPPAEGLLQKEGDWDGSTKGSSTSA. Over 1–307 the chain is Cytoplasmic; it reads MPGHSRSRDR…RPSFWKRYHK (307 aa). Basic residues predominate over residues 147 to 163; that stretch reads GKGKKRLDRETRRQRRK. Residues 308-328 form a helical; Signal-anchor for type II membrane protein membrane-spanning segment; that stretch reads TFIFFAILIVLAAIAIPVGII. Residues 329–830 lie on the Extracellular side of the membrane; the sequence is EARRLHGTSG…PSFGNLPEYY (502 aa). Residues asparagine 341, asparagine 376, asparagine 381, asparagine 393, asparagine 397, asparagine 546, and asparagine 558 are each glycosylated (N-linked (GlcNAc...) asparagine). Glutamate 597 serves as the catalytic Proton donor. 3 N-linked (GlcNAc...) asparagine glycosylation sites follow: asparagine 610, asparagine 669, and asparagine 689. Glutamate 702 (nucleophile) is an active-site residue.

It belongs to the glycosyl hydrolase 5 (cellulase A) family.

The protein resides in the cell membrane. It catalyses the reaction Successive hydrolysis of beta-D-glucose units from the non-reducing ends of (1-&gt;3)-beta-D-glucans, releasing alpha-glucose.. Its function is as follows. Glucosidase involved in the degradation of cellulosic biomass. Active on lichenan. This chain is Probable glucan 1,3-beta-glucosidase D (exgD), found in Aspergillus niger (strain ATCC MYA-4892 / CBS 513.88 / FGSC A1513).